Here is a 319-residue protein sequence, read N- to C-terminus: Ribosomal RNA small subunit methyltransferase H (319 aa).

S-adenosyl-L-methionine is bound by residues 39–41 (GGH), aspartate 59, phenylalanine 83, aspartate 104, and glutamine 111.

The protein belongs to the methyltransferase superfamily. RsmH family.

It localises to the cytoplasm. It catalyses the reaction cytidine(1402) in 16S rRNA + S-adenosyl-L-methionine = N(4)-methylcytidine(1402) in 16S rRNA + S-adenosyl-L-homocysteine + H(+). Functionally, specifically methylates the N4 position of cytidine in position 1402 (C1402) of 16S rRNA. This chain is Ribosomal RNA small subunit methyltransferase H, found in Ralstonia nicotianae (strain ATCC BAA-1114 / GMI1000) (Ralstonia solanacearum).